A 177-amino-acid polypeptide reads, in one-letter code: Major spike protein G (177 aa).

The protein belongs to the microvirus G protein family. As to quaternary structure, the virion is composed of 60 copies each of the F, G, and J proteins, and 12 copies of the H protein. There are 12 spikes which are each composed of 5 G and one H proteins.

The protein localises to the virion. In terms of biological role, attaches the circulating virion to the bacterial lipopolysaccharides which serve as receptor for the virus. Determines the phage host-range. Probably triggers with protein H the injection of the phage DNA into the host cytoplasm upon conformational changes induced by the interaction with host lipopolysaccharides. The sequence is that of Major spike protein G (G) from Escherichia phage G4 (Bacteriophage G4).